The chain runs to 911 residues: DNA ligase 4 (911 aa).

Residues Glu271, Thr272, Lys273, Leu274, Arg278, Glu331, Lys345, Phe367, Glu427, Lys432, Lys449, and Lys451 each contribute to the ATP site. The active-site N6-AMP-lysine intermediate is the Lys273. Glu331 contacts Mg(2+). Glu427 lines the Mg(2+) pocket. Positions 610–620 (LASKHFYVGGD) are required for catalytic activity. BRCT domains follow at residues 654–743 (KISN…PHFM) and 808–911 (SPLS…QYLI).

Belongs to the ATP-dependent DNA ligase family. In terms of assembly, interacts with XRCC4; the LIG4-XRCC4 subcomplex has a 1:2 stoichiometry and XRCC4 is required for LIG4 stability. Component of the core long-range non-homologous end joining (NHEJ) complex (also named DNA-PK complex) composed of PRKDC, LIG4, XRCC4, XRCC6/Ku70, XRCC5/Ku86 and NHEJ1/XLF. Additional component of the NHEJ complex includes PAXX. Following autophosphorylation, PRKDC dissociates from DNA, leading to formation of the short-range NHEJ complex, composed of LIG4, XRCC4, XRCC6/Ku70, XRCC5/Ku86 and NHEJ1/XLF. Interacts with DCLRE1C; the interaction is direct. Interacts with APLF. Mg(2+) serves as cofactor.

It is found in the nucleus. The enzyme catalyses ATP + (deoxyribonucleotide)n-3'-hydroxyl + 5'-phospho-(deoxyribonucleotide)m = (deoxyribonucleotide)n+m + AMP + diphosphate.. DNA ligase involved in DNA non-homologous end joining (NHEJ); required for double-strand break (DSB) repair and V(D)J recombination. Catalyzes the NHEJ ligation step of the broken DNA during DSB repair by resealing the DNA breaks after the gap filling is completed. Joins single-strand breaks in a double-stranded polydeoxynucleotide in an ATP-dependent reaction. LIG4 is mechanistically flexible: it can ligate nicks as well as compatible DNA overhangs alone, while in the presence of XRCC4, it can ligate ends with 2-nucleotides (nt) microhomology and 1-nt gaps. Forms a subcomplex with XRCC4; the LIG4-XRCC4 subcomplex is responsible for the NHEJ ligation step and XRCC4 enhances the joining activity of LIG4. Binding of the LIG4-XRCC4 complex to DNA ends is dependent on the assembly of the DNA-dependent protein kinase complex DNA-PK to these DNA ends. LIG4 regulates nuclear localization of XRCC4. The protein is DNA ligase 4 of Pongo abelii (Sumatran orangutan).